Reading from the N-terminus, the 543-residue chain is Protein P78/83 (543 aa).

3 disordered regions span residues 147–222 (QALP…QPAA), 235–325 (RNEK…SLSN), and 373–400 (MAKS…ANTP). The segment covering 182–221 (AAPPPPPSPVPNIPAPPPPPPPSMSELPPAPPMPTEPQPA) has biased composition (pro residues). One can recognise a WH2 domain in the interval 226–246 (DRQQLLEAIRNEKNRTRLRPV). Over residues 271 to 321 (PKPPSASPPPPPPPPPPPAPPAPPPMVDLSSAPPPPPLVDLPSEMLPPPAP) the composition is skewed to pro residues. Polar residues predominate over residues 375 to 384 (KSSSEATSND).

As to quaternary structure, forms a complex with proteins C42 and E27. Interacts with host actin-related protein 2/3 complex. Interacts with protein Ac102.

The protein localises to the host cytoplasm. The protein resides in the host nucleus. In terms of biological role, plays a role in the transport of the nucleocapsids from the cytoplasm toward the host nucleus together with the host actin-polymerizing Arp2/3 complex. The polypeptide is Protein P78/83 (P61) (Lepidoptera (butterflies and moths)).